A 571-amino-acid chain; its full sequence is Urease subunit alpha (571 aa).

The Urease domain occupies 132–571 (GAIDTHIHFI…LPMGQKYFLF (440 aa)). H137, H139, and K220 together coordinate Ni(2+). K220 carries the post-translational modification N6-carboxylysine. Residue H222 coordinates substrate. 2 residues coordinate Ni(2+): H249 and H275. H323 acts as the Proton donor in catalysis. D363 contributes to the Ni(2+) binding site.

Belongs to the metallo-dependent hydrolases superfamily. Urease alpha subunit family. Heterotrimer of UreA (gamma), UreB (beta) and UreC (alpha) subunits. Three heterotrimers associate to form the active enzyme. It depends on Ni cation as a cofactor. Post-translationally, carboxylation allows a single lysine to coordinate two nickel ions.

It localises to the cytoplasm. It catalyses the reaction urea + 2 H2O + H(+) = hydrogencarbonate + 2 NH4(+). It participates in nitrogen metabolism; urea degradation; CO(2) and NH(3) from urea (urease route): step 1/1. The chain is Urease subunit alpha from Corynebacterium urealyticum (strain ATCC 43042 / DSM 7109).